Reading from the N-terminus, the 584-residue chain is Pentalenolactone D synthase (584 aa).

FAD contacts are provided by residues 55–56, 77–78, 85–86, 97–98, Y103, V147, and M486; these read IG, DG, TW, and DV.

This sequence belongs to the FAD-binding monooxygenase family. It depends on FAD as a cofactor.

It catalyses the reaction 1-deoxy-11-oxopentalenate + NADPH + O2 + H(+) = pentalenolactone D + NADP(+) + H2O. It participates in antibiotic biosynthesis; pentalenolactone biosynthesis. Functionally, catalyzes the flavin-dependent Baeyer-Villiger oxidation of 1-deoxy-11-oxopentalenic acid to pentalenolactone D in the biosynthesis of pentalenolactone antibiotic. The polypeptide is Pentalenolactone D synthase (penE) (Streptomyces exfoliatus (Streptomyces hydrogenans)).